Reading from the N-terminus, the 198-residue chain is tRNA (pseudouridine(54)-N(1))-methyltransferase (198 aa).

Residue leucine 128 coordinates S-adenosyl-L-methionine.

It belongs to the methyltransferase superfamily. TrmY family. As to quaternary structure, homodimer.

It localises to the cytoplasm. The catalysed reaction is pseudouridine(54) in tRNA + S-adenosyl-L-methionine = N(1)-methylpseudouridine(54) in tRNA + S-adenosyl-L-homocysteine + H(+). In terms of biological role, specifically catalyzes the N1-methylation of pseudouridine at position 54 (Psi54) in tRNAs. This is tRNA (pseudouridine(54)-N(1))-methyltransferase from Haloarcula marismortui (strain ATCC 43049 / DSM 3752 / JCM 8966 / VKM B-1809) (Halobacterium marismortui).